The following is a 565-amino-acid chain: Phosphomethylpyrimidine synthase (565 aa).

Substrate contacts are provided by residues asparagine 201, methionine 230, tyrosine 259, histidine 295, 315 to 317 (SRG), 356 to 359 (DGLR), and glutamate 395. A Zn(2+)-binding site is contributed by histidine 399. Tyrosine 422 lines the substrate pocket. A Zn(2+)-binding site is contributed by histidine 463. The [4Fe-4S] cluster site is built by cysteine 543, cysteine 546, and cysteine 551.

This sequence belongs to the ThiC family. As to quaternary structure, homodimer. Requires [4Fe-4S] cluster as cofactor.

The enzyme catalyses 5-amino-1-(5-phospho-beta-D-ribosyl)imidazole + S-adenosyl-L-methionine = 4-amino-2-methyl-5-(phosphooxymethyl)pyrimidine + CO + 5'-deoxyadenosine + formate + L-methionine + 3 H(+). The protein operates within cofactor biosynthesis; thiamine diphosphate biosynthesis. Catalyzes the synthesis of the hydroxymethylpyrimidine phosphate (HMP-P) moiety of thiamine from aminoimidazole ribotide (AIR) in a radical S-adenosyl-L-methionine (SAM)-dependent reaction. The sequence is that of Phosphomethylpyrimidine synthase from Ehrlichia canis (strain Jake).